The primary structure comprises 639 residues: uncharacterized protein (639 aa).

A signal peptide spans 1 to 16; the sequence is MLTLYLFTATCCFVCA. Disordered stretches follow at residues 80-128 and 432-488; these read RRRA…SDKL and QTAT…TSRT. Composition is skewed to polar residues over residues 108–122 and 432–446; these read TYAT…TASP and QTAT…QQQP. Over residues 465 to 480 the composition is skewed to basic and acidic residues; the sequence is HGDEPHSDGELRRESH.

This is an uncharacterized protein from Human cytomegalovirus (strain Merlin) (HHV-5).